The primary structure comprises 433 residues: Glutamate-1-semialdehyde 2,1-aminomutase (433 aa).

N6-(pyridoxal phosphate)lysine is present on lysine 272.

This sequence belongs to the class-III pyridoxal-phosphate-dependent aminotransferase family. HemL subfamily. As to quaternary structure, homodimer. Requires pyridoxal 5'-phosphate as cofactor.

The protein localises to the cytoplasm. It carries out the reaction (S)-4-amino-5-oxopentanoate = 5-aminolevulinate. It functions in the pathway porphyrin-containing compound metabolism; protoporphyrin-IX biosynthesis; 5-aminolevulinate from L-glutamyl-tRNA(Glu): step 2/2. It participates in porphyrin-containing compound metabolism; chlorophyll biosynthesis. This Synechococcus sp. (strain WH7803) protein is Glutamate-1-semialdehyde 2,1-aminomutase.